The primary structure comprises 1485 residues: Cystic fibrosis transmembrane conductance regulator (1485 aa).

Topologically, residues 1-78 (MQRSPVEDAN…SLLRAMARCY (78 aa)) are cytoplasmic. Residues 79–99 (IKPFLLFGFLLYIGEATKTVQ) form a helical membrane-spanning segment. The ABC transmembrane type-1 1 domain maps to 83–353 (LLFGFLLYIG…CMVLRMTVTR (271 aa)). The Extracellular segment spans residues 100–123 (PQLLGRIIASFDPAHEPERANGYF). The helical transmembrane segment at 124–149 (LAFGLGLLFTARFLLLQPAMFGLHHL) threads the bilayer. Residues 150-195 (GMQIRIALFSIIYKKTLKLSSRVLDKISTGQLVSLMSANLGKFDQS) lie on the Cytoplasmic side of the membrane. A helical transmembrane segment spans residues 196 to 216 (LGMAHFIWISPLQCILCTGLI). Topologically, residues 217–224 (WELIDVNS) are extracellular. Residues 225–245 (FCALAAISLLGVLQAFLSHKM) traverse the membrane as a helical segment. The Cytoplasmic segment spans residues 246–299 (GPYKAQKVLLTNKRLALTSEIMENLHSVKAYGWEEIMETLIKNIRQDEVKLTRK). Residues 300-320 (IGSLRYFYSSAYFFSAIFVIV) traverse the membrane as a helical segment. At 321-340 (AAVVPHALSRGINLRRIFTT) the chain is on the extracellular side. Residues 341 to 363 (LSYCMVLRMTVTRQLPGSIQMWY) form a helical membrane-spanning segment. Over 364-856 (DTMRLIWKIE…YVRYVSNNKS (493 aa)) the chain is Cytoplasmic. ATP is bound by residues Trp-402, 457–464 (GSMGSGKS), and Gln-492. Residues 424–645 (NGDAGLFFTN…RPDFSSLLLG (222 aa)) enclose the ABC transporter 1 domain. The segment at 653 to 826 (SAERRCSILT…GILEEENIEA (174 aa)) is disordered R region. The helical transmembrane segment at 857 to 877 (LLYVLIFILFIAAIEIAGSVA) threads the bilayer. Residues 860 to 1163 (VLIFILFIAA…CVATSIAVDG (304 aa)) form the ABC transmembrane type-1 2 domain. Over 878 to 924 (GIFLITDELWREEHQRSEPNMTKHSNASSSGQTYAITVTPTSSYYIL) the chain is Extracellular. 2 N-linked (GlcNAc...) asparagine glycosylation sites follow: Asn-897 and Asn-903. The discontinuously helical transmembrane segment at 925 to 946 (YIYVATSESLLAMGFFRGLPFV) threads the bilayer. The Cytoplasmic segment spans residues 947-996 (HTTITISKKLHQKMLHAVLSAPMSVLNTMKTGRIMNRFTKDMATIDDMLP). Residues 997-1019 (LLMFDFVQLTVVVVGCILVVSIV) traverse the membrane as a helical segment. The Extracellular segment spans residues 1020 to 1021 (RP). Residues 1022-1042 (YIFLAATPLAIIFIVMRKYFL) form a helical membrane-spanning segment. Over 1043 to 1103 (RTGQQLKQLE…TATWFLYLST (61 aa)) the chain is Cytoplasmic. A helical membrane pass occupies residues 1104 to 1124 (LRWFLFRADILFVFFFTLAAW). Residues 1125 to 1138 (IAVGTNQDKPGEIG) are Extracellular-facing. A helical membrane pass occupies residues 1139-1159 (IIICLAMLILGTFQWCVATSI). Topologically, residues 1160–1485 (AVDGMMRSVD…AEDNIQDTRL (326 aa)) are cytoplasmic. The ABC transporter 2 domain occupies 1211-1444 (IEVRNLTVKY…TSHLKQAISP (234 aa)). Residues Tyr-1220 and 1245–1252 (GRTGSGKS) contribute to the ATP site. The segment at 1452-1485 (PRRNSSMRTPQSKLSSVTQTLQEEAEDNIQDTRL) is disordered. Positions 1454–1473 (RNSSMRTPQSKLSSVTQTLQ) are enriched in polar residues. A compositionally biased stretch (acidic residues) spans 1474-1485 (EEAEDNIQDTRL). The PDZ-binding motif lies at 1483-1485 (TRL).

It belongs to the ABC transporter superfamily. ABCC family. CFTR transporter (TC 3.A.1.202) subfamily. In terms of assembly, monomer; does not require oligomerization for channel activity. Interacts with cse1l; this interaction may down-regulate cftr activity. Phosphorylated; this activates the channel. Dephosphorylation strongly decreases ATPase activity. Phosphorylation at PKA sites activates the channel. Phosphorylation at PKC sites enhances the response to phosphorylation by PKA. Detected in gut epithelium (at protein level). Detected in kidney, spleen, intestine and liver. Detected in pancreatic duct epithelium at 5 dpf and throughout adult life.

The protein resides in the apical cell membrane. It is found in the early endosome membrane. The protein localises to the cell membrane. It localises to the recycling endosome membrane. Its subcellular location is the endoplasmic reticulum membrane. It catalyses the reaction ATP + H2O + closed Cl(-) channel = ADP + phosphate + open Cl(-) channel.. It carries out the reaction chloride(in) = chloride(out). The enzyme catalyses hydrogencarbonate(in) = hydrogencarbonate(out). The catalysed reaction is ATP + H2O = ADP + phosphate + H(+). In terms of biological role, epithelial ion channel that plays an important role in the regulation of epithelial ion and water transport and fluid homeostasis. Mediates the transport of chloride ions across the cell membrane. Possesses an intrinsic ATPase activity and utilizes ATP to gate its channel; the passive flow of anions through the channel is gated by cycles of ATP binding and hydrolysis by the ATP-binding domains. The ion channel is also permeable to HCO(3)(-); selectivity depends on the extracellular chloride concentration. Exerts its function also by modulating the activity of other ion channels and transporters. Contributes to the regulation of the pH and the ion content of the epithelial fluid layer. Required for normal fluid homeostasis in the gut. Required for normal volume expansion and cell shape changes of Kupffer's vesicle during embryonic development and for normal establishment of left-right body patterning. Required for normal resistance to infection by P.aeruginosa strain PA14 and strain SMC573. The polypeptide is Cystic fibrosis transmembrane conductance regulator (Danio rerio (Zebrafish)).